Here is a 352-residue protein sequence, read N- to C-terminus: Heavy metal-associated isoprenylated plant protein 36 (352 aa).

The HMA domain occupies 29–92 (YTTWVLRVSI…KIMKAGRHAE (64 aa)). A metal cation-binding residues include Cys40 and Cys43. Disordered stretches follow at residues 96-150 (TSME…GNFD), 162-211 (QLQP…GPPE), and 229-252 (PHLH…RHHP). Residues 97-107 (SMENNINNDCN) show a composition bias toward polar residues. Positions 118–128 (ETSGDEDDDEN) are enriched in acidic residues. The span at 133 to 148 (NGGGDVGGGGGGGGGN) shows a compositional bias: gly residues. The span at 172–183 (KKKKKKKKKKKS) shows a compositional bias: basic residues. Positions 192–203 (EGGGGGGGGGGP) are enriched in gly residues. Cys349 is subject to Cysteine methyl ester. Residue Cys349 is the site of S-farnesyl cysteine attachment. A propeptide spans 350–352 (CVM) (removed in mature form).

It belongs to the HIPP family.

Heavy-metal-binding protein. The chain is Heavy metal-associated isoprenylated plant protein 36 from Arabidopsis thaliana (Mouse-ear cress).